The following is a 435-amino-acid chain: Xylose isomerase (435 aa).

Mg(2+) is bound by residues Asp-306 and Asp-308.

This sequence belongs to the xylose isomerase family. In terms of assembly, homotetramer. It depends on Mg(2+) as a cofactor.

It is found in the cytoplasm. It carries out the reaction alpha-D-xylose = alpha-D-xylulofuranose. The polypeptide is Xylose isomerase (Allorhizobium ampelinum (strain ATCC BAA-846 / DSM 112012 / S4) (Agrobacterium vitis (strain S4))).